The chain runs to 324 residues: Putative F-box/kelch-repeat protein At5g28160 (324 aa).

One can recognise an F-box domain in the interval 7-54; sequence RPSFLSLPDEIILSCLARISRSYYPKLSLVCKTFRTLLISNELIVARL. The stretch at 170 to 216 is one Kelch repeat; it reads KIYVMGGCMADESVNWGEVFDIKTQTWEALPDPGPEFRFSSIRKIDV.

The sequence is that of Putative F-box/kelch-repeat protein At5g28160 from Arabidopsis thaliana (Mouse-ear cress).